A 611-amino-acid polypeptide reads, in one-letter code: Solute carrier family 23 member 3 (611 aa).

The Cytoplasmic portion of the chain corresponds to 1 to 52; it reads MSRSPLHPIPLLSEGYQDTPAPLPPLLPPLQNPSSRSWASRVFGPSTWGLSC. Residues 53–73 form a helical membrane-spanning segment; sequence LLALQHFLVLASLLWASHLLL. Residues 74–88 lie on the Extracellular side of the membrane; the sequence is LHGLPPGGLSYPPAQ. A helical transmembrane segment spans residues 89 to 109; the sequence is LLASSFFSCGLSTVLQTWMGS. The Cytoplasmic portion of the chain corresponds to 110 to 168; it reads RLPLIQAPSLEFLIPALVLTNQKLPLTTKTPGNASLSLPLCSLTRSCHGLELWNTSLRE. Residues 169-189 traverse the membrane as a helical segment; the sequence is VSGAVVVSGLLQGTIGLLGVP. Residues 190 to 191 are Extracellular-facing; it reads GR. The helical transmembrane segment at 192–212 threads the bilayer; sequence VFPYCGPLVLAPSLVVAGLSA. Residues 213 to 215 lie on the Cytoplasmic side of the membrane; it reads HKE. Residues 216–236 form a helical membrane-spanning segment; that stretch reads VAQFCSAHWGLALLLILLMVV. The Extracellular portion of the chain corresponds to 237–269; the sequence is CSQHLGSCQIPLCSWRPSSTSTHICIPVFRLLS. Residues 270–290 form a helical membrane-spanning segment; sequence VLAPVACVWFISAFVGTSVIP. Residues 291–319 are Cytoplasmic-facing; it reads LQLSEPSDAPWFWLPHPGEWEWPLLTPRA. A helical transmembrane segment spans residues 320-340; that stretch reads LAAGISMALAASTSSLGCYAL. Over 341 to 358 the chain is Extracellular; it reads CGQLLRLSPPPPHACSRG. The helical transmembrane segment at 359 to 379 threads the bilayer; the sequence is LSLEGLGSVLAGLLGSPLGTA. Topologically, residues 380–397 are cytoplasmic; that stretch reads SSFPNVGTVSLFQTGSRR. Residues 398-417 form a helical membrane-spanning segment; sequence VAHLVGLFCMGLGLSPRLAQ. The Extracellular portion of the chain corresponds to 418-426; the sequence is LFTSIPLPV. Residues 427–449 traverse the membrane as a helical segment; the sequence is LGGVLGVTQAVVLSAGFSSFHLA. At 450 to 455 the chain is on the cytoplasmic side; it reads DIDSGR. The helical transmembrane segment at 456-475 threads the bilayer; it reads NVFIVGFSIFMALLLPRWLR. Residues 476 to 489 lie on the Extracellular side of the membrane; it reads EAPVLLNTGWSPLD. A helical membrane pass occupies residues 490 to 510; it reads MFLRSLLAEPIFLAGLLGFLL. At 511-611 the chain is on the cytoplasmic side; that stretch reads ENTISGTRAE…TASREGVRSQ (101 aa). Residues 574 to 611 are disordered; the sequence is PEDSGDEGGSSKTGERADLLPNSGESYSTASREGVRSQ. Residues 596-605 show a composition bias toward polar residues; sequence SGESYSTASR.

Belongs to the nucleobase:cation symporter-2 (NCS2) (TC 2.A.40) family.

Its subcellular location is the membrane. The protein localises to the cytoplasm. It carries out the reaction hypoxanthine(out) + Na(+)(out) = hypoxanthine(in) + Na(+)(in). Acts as a sodium-dependent hypoxanthine transporter. May show xanthine-hypoxanthine exchange activity. This Mus musculus (Mouse) protein is Solute carrier family 23 member 3 (Slc23a3).